Consider the following 112-residue polypeptide: UPF0060 membrane protein IL2332 (112 aa).

Transmembrane regions (helical) follow at residues 10 to 30 (LGLF…PYLW), 36 to 56 (SAWL…LLTL), 64 to 84 (VYAA…KAVE), and 90 to 110 (TYDA…AVGW).

Belongs to the UPF0060 family.

Its subcellular location is the cell inner membrane. This is UPF0060 membrane protein IL2332 from Idiomarina loihiensis (strain ATCC BAA-735 / DSM 15497 / L2-TR).